A 310-amino-acid polypeptide reads, in one-letter code: Ribosomal RNA small subunit methyltransferase H (310 aa).

S-adenosyl-L-methionine contacts are provided by residues 33–35, Asp52, Phe79, Asp98, and Gln105; that span reads GGH.

This sequence belongs to the methyltransferase superfamily. RsmH family.

It is found in the cytoplasm. It carries out the reaction cytidine(1402) in 16S rRNA + S-adenosyl-L-methionine = N(4)-methylcytidine(1402) in 16S rRNA + S-adenosyl-L-homocysteine + H(+). Functionally, specifically methylates the N4 position of cytidine in position 1402 (C1402) of 16S rRNA. This chain is Ribosomal RNA small subunit methyltransferase H, found in Campylobacter jejuni subsp. jejuni serotype O:6 (strain 81116 / NCTC 11828).